The sequence spans 140 residues: MIDLENSTEFEIDTLNLENIANTLTTKDIELIVVKNDEIQELNKEYRNIDKPTDVLSFPMNFEVIDMPLLGSIVISTDFVQEKAKEFKHSFNEEFTLLFIHGLLHLLGFDHEIDNGEHRLKEEELIEKFKLPSSLIVRNS.

Residues His-101, His-105, and His-111 each coordinate Zn(2+).

This sequence belongs to the endoribonuclease YbeY family. Zn(2+) is required as a cofactor.

The protein resides in the cytoplasm. Single strand-specific metallo-endoribonuclease involved in late-stage 70S ribosome quality control and in maturation of the 3' terminus of the 16S rRNA. The sequence is that of Endoribonuclease YbeY from Aliarcobacter butzleri (strain RM4018) (Arcobacter butzleri).